A 184-amino-acid chain; its full sequence is ATP synthase subunit delta (184 aa).

Belongs to the ATPase delta chain family. In terms of assembly, F-type ATPases have 2 components, F(1) - the catalytic core - and F(0) - the membrane proton channel. F(1) has five subunits: alpha(3), beta(3), gamma(1), delta(1), epsilon(1). CF(0) has four main subunits: a(1), b(1), b'(1) and c(10-14). The alpha and beta chains form an alternating ring which encloses part of the gamma chain. F(1) is attached to F(0) by a central stalk formed by the gamma and epsilon chains, while a peripheral stalk is formed by the delta, b and b' chains.

The protein resides in the cell inner membrane. F(1)F(0) ATP synthase produces ATP from ADP in the presence of a proton or sodium gradient. F-type ATPases consist of two structural domains, F(1) containing the extramembraneous catalytic core and F(0) containing the membrane proton channel, linked together by a central stalk and a peripheral stalk. During catalysis, ATP synthesis in the catalytic domain of F(1) is coupled via a rotary mechanism of the central stalk subunits to proton translocation. In terms of biological role, this protein is part of the stalk that links CF(0) to CF(1). It either transmits conformational changes from CF(0) to CF(1) or is implicated in proton conduction. This Erythrobacter litoralis (strain HTCC2594) protein is ATP synthase subunit delta.